The following is a 1162-amino-acid chain: Leptin receptor (1162 aa).

Positions methionine 1–alanine 21 are cleaved as a signal peptide. Residues leucine 22 to glycine 839 lie on the Extracellular side of the membrane. 5 cysteine pairs are disulfide-bonded: cysteine 37-cysteine 90, cysteine 89-cysteine 99, cysteine 131-cysteine 142, cysteine 186-cysteine 195, and cysteine 188-cysteine 193. N-linked (GlcNAc...) asparagine glycans are attached at residues asparagine 41, asparagine 56, asparagine 73, and asparagine 98. Residue asparagine 187 is glycosylated (N-linked (GlcNAc...) asparagine). The Fibronectin type-III 1 domain occupies proline 238 to valine 331. N-linked (GlcNAc...) asparagine glycosylation is found at asparagine 275 and asparagine 345. Residues glutamine 329–aspartate 427 form the Ig-like domain. 2 disulfide bridges follow: cysteine 350-cysteine 410 and cysteine 411-cysteine 416. An N-linked (GlcNAc...) asparagine glycan is attached at asparagine 431. 3 disulfides stabilise this stretch: cysteine 434-cysteine 445, cysteine 471-cysteine 526, and cysteine 486-cysteine 496. The leptin-binding stretch occupies residues histidine 465–glutamate 482. N-linked (GlcNAc...) asparagine glycans are attached at residues asparagine 514, asparagine 622, asparagine 657, asparagine 668, asparagine 686, asparagine 695, asparagine 698, and asparagine 726. 3 Fibronectin type-III domains span residues proline 537–methionine 632, proline 637–phenylalanine 729, and alanine 738–aspartate 832. The short motif at tryptophan 620 to serine 624 is the WSXWS motif element. Residues leucine 840–isoleucine 860 form a helical membrane-spanning segment. The Cytoplasmic portion of the chain corresponds to serine 861–valine 1162. The short motif at phenylalanine 869–lysine 877 is the Box 1 motif element. Serine 880 carries the post-translational modification Phosphoserine. The tract at residues glutamate 891 to leucine 896 is required for JAK2 activation. The tract at residues leucine 896 to valine 904 is required for STAT3 phosphorylation. At tyrosine 985 the chain carries Phosphotyrosine; by JAK2. Tyrosine 1077 is modified (phosphotyrosine). Tyrosine 1138 is subject to Phosphotyrosine; by JAK2.

This sequence belongs to the type I cytokine receptor family. Type 2 subfamily. In terms of assembly, present as a mixture of monomers and dimers. The phosphorylated receptor binds a number of SH2 domain-containing proteins such as JAK2, STAT3, PTPN11, and SOCS3. Interaction with SOCS3 inhibits JAK/STAT signaling and MAPK cascade. In terms of processing, on ligand binding, phosphorylated on two conserved C-terminal tyrosine residues (isoform B only) by JAK2. Tyr-985 is required for complete binding and activation of PTPN11, ERK/FOS activation,for interaction with SOCS3 and SOCS3 mediated inhibition of leptin signaling. Phosphorylation on Tyr-1138 is required for STAT3 binding/activation. Phosphorylation of Tyr-1077 has a more accessory role. As to expression, isoform A: highest level of expression in lung and kidney, also present in heart, brain, spleen, liver, muscle, choroid plexus and hypothalamus. Isoform B: highest levels of expression in hypothalamus and lower levels in brain, testes and adipose tissue. Expressed by neurons of the parabrachial nucleus. Expressed by peripheral blood mononuclear cells and CD4(+) T-cells. Isoform E: expressed in adipose tissue, liver, hypothalamus, cerebral microvessels, heart, and testes.

The protein resides in the cell membrane. The protein localises to the basolateral cell membrane. Its subcellular location is the secreted. In terms of biological role, receptor for hormone LEP/leptin. On ligand binding, mediates LEP central and peripheral effects through the activation of different signaling pathways such as JAK2/STAT3 and MAPK cascade/FOS. In the hypothalamus, LEP acts as an appetite-regulating factor that induces a decrease in food intake and an increase in energy consumption by inducing anorexinogenic factors and suppressing orexigenic neuropeptides, also regulates bone mass and secretion of hypothalamo-pituitary-adrenal hormones. In the periphery, increases basal metabolism, influences reproductive function, regulates pancreatic beta-cell function and insulin secretion, is pro-angiogenic and affects innate and adaptive immunity. Control of energy homeostasis and melanocortin production (stimulation of POMC and full repression of AgRP transcription) is mediated by STAT3 signaling, whereas distinct signals regulate NPY and the control of fertility, growth and glucose homeostasis. Involved in the regulation of counter-regulatory response to hypoglycemia by inhibiting neurons of the parabrachial nucleus. Has a specific effect on T lymphocyte responses, differentially regulating the proliferation of naive and memory T-cells. Leptin increases Th1 and suppresses Th2 cytokine production. May transport LEP across the blood-brain barrier. Binds LEP and mediates LEP endocytosis. Does not induce phosphorylation of and activate STAT3. Functionally, antagonizes Isoform A and isoform B-mediated LEP binding and endocytosis. In Mus musculus (Mouse), this protein is Leptin receptor (Lepr).